A 562-amino-acid chain; its full sequence is Glucocorticoid modulatory element-binding protein 1 (562 aa).

At Ala-2 the chain carries N-acetylalanine. One can recognise an SAND domain in the interval 72–156 (ASSIEANEDM…RKMMDSGQID (85 aa)). Cys-103 is a binding site for Zn(2+). The DNA site is built by Lys-129, Lys-133, Lys-136, and Arg-147. 3 residues coordinate Zn(2+): His-160, Cys-164, and Cys-168. A coiled-coil region spans residues 311–357 (LDNRRKQVEHGEEQFLYTLADLERQLEEQKKQAQDPRLKSQTVQNVV). Positions 360 to 384 (PVSTPKPPKRPRLQRPASTTVLSPS) are disordered. Positions 375–384 (PASTTVLSPS) are enriched in polar residues.

As to quaternary structure, homodimer, and heterodimer of GMEB1 and GMEB2. Interacts with the glucocorticoid receptor (NR3C1) and NCOA2/TIF2. May interact with HSP27 and CREB-binding protein (CBP). Interacts with TRIM63.

Its subcellular location is the nucleus. The protein resides in the cytoplasm. In terms of biological role, trans-acting factor that binds to glucocorticoid modulatory elements (GME) present in the TAT (tyrosine aminotransferase) promoter and increases sensitivity to low concentrations of glucocorticoids. Also binds to the transferrin receptor promoter. This is Glucocorticoid modulatory element-binding protein 1 (Gmeb1) from Rattus norvegicus (Rat).